We begin with the raw amino-acid sequence, 325 residues long: MGIFPGIILIFLRVKFATAAVIVSGHQKSSTLSHEMSGLNWKPFVYGGLASIVAEFGTFPVDLTKTRLQVQGQSIDVRFKEIKYRGMFHALFRIYKEEGILALYSGIAPALLRQASYGTIKIGIYQSLKRLFVERLEDETLLINMICGVVSGVISSTIANPTDVLKIRMQAQGSLFQGSMIGSFIDIYQQEGTRGLWRGVVPTAQRAAIVVGVELPVYDITKKHLIVSGMLGDTILTHFVSSFTCGLAGALASNPVDVVRTRMMNQRAIVGHVDLYKGTLDGILKMWKHEGFFALYKGFWPNWLRLGPWNIIFFITYEQLKRLQI.

Helical transmembrane passes span 38-54, 112-128, 145-165, 199-215, 240-256, and 298-315; these read GLNW…SIVA, LRQA…YQSL, MICG…TDVL, GVVP…GVEL, VSSF…SNPV, and GFWP…IFFI. Solcar repeat units follow at residues 42–131, 139–224, and 233–323; these read KPFV…LKRL, ETLL…TKKH, and DTIL…LKRL.

It belongs to the mitochondrial carrier (TC 2.A.29) family. Homotetramer. In terms of tissue distribution, mainly expressed in brain, particularly abundant in cortex, hippocampus thalamus, amygdala and hypothalamus. Highly expressed in heart and kidney, but not liver or lung (at protein level). In the nervous system, expressed in cortex, basal ganglia, substantia nigra, cerebellum, and spinal cord (at protein level).

It is found in the mitochondrion inner membrane. It catalyses the reaction sulfite(in) + sulfate(out) = sulfite(out) + sulfate(in). The catalysed reaction is thiosulfate(in) + sulfate(out) = thiosulfate(out) + sulfate(in). The enzyme catalyses sulfate(out) + phosphate(in) = sulfate(in) + phosphate(out). It carries out the reaction oxalate(in) + sulfate(out) = oxalate(out) + sulfate(in). It catalyses the reaction malonate(in) + sulfate(out) = malonate(out) + sulfate(in). The catalysed reaction is maleate(in) + sulfate(out) = maleate(out) + sulfate(in). The enzyme catalyses (S)-malate(in) + sulfate(out) = (S)-malate(out) + sulfate(in). It carries out the reaction (3S)-citramalate(in) + sulfate(out) = (3S)-citramalate(out) + sulfate(in). It catalyses the reaction (3R)-citramalate(in) + sulfate(out) = (3R)-citramalate(out) + sulfate(in). The catalysed reaction is sulfate(out) + succinate(in) = sulfate(in) + succinate(out). The enzyme catalyses (S,S)-tartrate(in) + sulfate(out) = (S,S)-tartrate(out) + sulfate(in). It carries out the reaction (2R,3R)-tartrate(in) + sulfate(out) = (2R,3R)-tartrate(out) + sulfate(in). It catalyses the reaction D-aspartate(in) + sulfate(out) = D-aspartate(out) + sulfate(in). The catalysed reaction is L-aspartate(in) + sulfate(out) = L-aspartate(out) + sulfate(in). The enzyme catalyses sulfate(in) = sulfate(out). It carries out the reaction phosphate(in) = phosphate(out). It catalyses the reaction (S)-malate(out) = (S)-malate(in). The catalysed reaction is citrate(in) = citrate(out). The enzyme catalyses L-aspartate(out) = L-aspartate(in). It carries out the reaction L-glutamate(out) = L-glutamate(in). It catalyses the reaction H(+)(in) = H(+)(out). The catalysed reaction is chloride(in) = chloride(out). In terms of biological role, transports inorganic anions (sulfate, sulfite, thiosulfate and phosphate) and, to a lesser extent, a variety of dicarboxylates (e.g. malonate, malate and citramalate) and, even more so, aspartate and glutamate and tricarboxylates. May catalyze the export of sulfite and thiosulfate (the hydrogen sulfide degradation products) from the mitochondria, thereby modulating the level of the hydrogen sulfide. Also can mediate a very low unidirectional transport of anions including sulfate, phosphate, (S)-malate, citrate, L-aspartate and L-glutamate. Maintains oxidative balance (through uncoupling activities) and ATP production (by modifying mitochondrial membrane potential). Is able to transport protons across lipid membranes. Also exhibits transmembrane chloride transport activity to a lesser extent. May modify mitochondrial respiratory efficiency and mitochondrial oxidant production. The chain is Brain mitochondrial carrier protein 1 from Mus musculus (Mouse).